Consider the following 150-residue polypeptide: Phosphopantetheine adenylyltransferase (150 aa).

Thr-15 contributes to the substrate binding site. Residues 15 to 16 (TF) and His-23 each bind ATP. Substrate-binding residues include Ile-80 and Arg-94. ATP is bound by residues 95–97 (GIR), Glu-105, and 130–136 (LENISSR).

Belongs to the bacterial CoaD family. As to quaternary structure, homohexamer. Mg(2+) serves as cofactor.

Its subcellular location is the cytoplasm. The catalysed reaction is (R)-4'-phosphopantetheine + ATP + H(+) = 3'-dephospho-CoA + diphosphate. The protein operates within cofactor biosynthesis; coenzyme A biosynthesis; CoA from (R)-pantothenate: step 4/5. Functionally, reversibly transfers an adenylyl group from ATP to 4'-phosphopantetheine, yielding dephospho-CoA (dPCoA) and pyrophosphate. In Malacoplasma penetrans (strain HF-2) (Mycoplasma penetrans), this protein is Phosphopantetheine adenylyltransferase.